The primary structure comprises 174 residues: Crossover junction endodeoxyribonuclease RuvC (174 aa).

Residues D8, E67, and D139 contribute to the active site. Mg(2+) contacts are provided by D8, E67, and D139.

Belongs to the RuvC family. Homodimer which binds Holliday junction (HJ) DNA. The HJ becomes 2-fold symmetrical on binding to RuvC with unstacked arms; it has a different conformation from HJ DNA in complex with RuvA. In the full resolvosome a probable DNA-RuvA(4)-RuvB(12)-RuvC(2) complex forms which resolves the HJ. Requires Mg(2+) as cofactor.

It is found in the cytoplasm. The enzyme catalyses Endonucleolytic cleavage at a junction such as a reciprocal single-stranded crossover between two homologous DNA duplexes (Holliday junction).. Functionally, the RuvA-RuvB-RuvC complex processes Holliday junction (HJ) DNA during genetic recombination and DNA repair. Endonuclease that resolves HJ intermediates. Cleaves cruciform DNA by making single-stranded nicks across the HJ at symmetrical positions within the homologous arms, yielding a 5'-phosphate and a 3'-hydroxyl group; requires a central core of homology in the junction. The consensus cleavage sequence is 5'-(A/T)TT(C/G)-3'. Cleavage occurs on the 3'-side of the TT dinucleotide at the point of strand exchange. HJ branch migration catalyzed by RuvA-RuvB allows RuvC to scan DNA until it finds its consensus sequence, where it cleaves and resolves the cruciform DNA. The polypeptide is Crossover junction endodeoxyribonuclease RuvC (Pseudomonas putida (strain ATCC 700007 / DSM 6899 / JCM 31910 / BCRC 17059 / LMG 24140 / F1)).